Consider the following 492-residue polypeptide: Protein GvpD2 (492 aa).

39–46 is an ATP binding site; sequence GAPGTGKT. The span at 355–368 shows a compositional bias: basic and acidic residues; sequence RDHDDAVDPDRLPG. The disordered stretch occupies residues 355–379; that stretch reads RDHDDAVDPDRLPGHDTTPTEHGTL.

It belongs to the gas vesicle GvpD family. In terms of assembly, homodimer. Interacts with GvpE, also with GvpE from H.mediterranei.

The protein resides in the cytoplasm. In terms of biological role, causes a decrease in the amount of GvpE protein. Gas vesicles are hollow, gas filled proteinaceous nanostructures found in several microbial planktonic microorganisms. They allow positioning of halobacteria at the optimal depth for growth in the poorly aerated, shallow brine pools of their habitat. Expression of 2 c-vac DNA fragments containing 2 divergently transcribed regions (gvpE-gvpF-gvpG-gvpH-gvpI-gvpJ-gvpK-gvpL-gvpM and gvpA-gvpC-gvpN-gvpO) allows H.volcanii to produce gas vesicles. The polypeptide is Protein GvpD2 (Halobacterium salinarum (strain ATCC 700922 / JCM 11081 / NRC-1) (Halobacterium halobium)).